A 494-amino-acid chain; its full sequence is Cobyric acid synthase (494 aa).

A GATase cobBQ-type domain is found at 248 to 444; sequence EIEIAIIKLP…LHGIFENDEW (197 aa). Cys-329 acts as the Nucleophile in catalysis. His-436 is an active-site residue.

The protein belongs to the CobB/CobQ family. CobQ subfamily.

It functions in the pathway cofactor biosynthesis; adenosylcobalamin biosynthesis. Catalyzes amidations at positions B, D, E, and G on adenosylcobyrinic A,C-diamide. NH(2) groups are provided by glutamine, and one molecule of ATP is hydrogenolyzed for each amidation. In Prochlorococcus marinus (strain NATL1A), this protein is Cobyric acid synthase.